The sequence spans 245 residues: Probable phosphatase YcdX (245 aa).

Histidine 7, histidine 9, histidine 15, histidine 40, glutamate 73, histidine 101, histidine 131, aspartate 192, and histidine 194 together coordinate Zn(2+).

This sequence belongs to the PHP family. Homotrimer. The cofactor is Zn(2+).

This chain is Probable phosphatase YcdX, found in Escherichia coli (strain K12 / MC4100 / BW2952).